A 206-amino-acid chain; its full sequence is Octanoyltransferase (206 aa).

The region spanning 30–206 (PETNDEIWLV…EFVTLLNNSI (177 aa)) is the BPL/LPL catalytic domain. Substrate-binding positions include 69 to 76 (RGGQVTYH), 137 to 139 (SLG), and 150 to 152 (GIA). Cysteine 168 (acyl-thioester intermediate) is an active-site residue.

Belongs to the LipB family.

Its subcellular location is the cytoplasm. The enzyme catalyses octanoyl-[ACP] + L-lysyl-[protein] = N(6)-octanoyl-L-lysyl-[protein] + holo-[ACP] + H(+). The protein operates within protein modification; protein lipoylation via endogenous pathway; protein N(6)-(lipoyl)lysine from octanoyl-[acyl-carrier-protein]: step 1/2. Its function is as follows. Catalyzes the transfer of endogenously produced octanoic acid from octanoyl-acyl-carrier-protein onto the lipoyl domains of lipoate-dependent enzymes. Lipoyl-ACP can also act as a substrate although octanoyl-ACP is likely to be the physiological substrate. The polypeptide is Octanoyltransferase (Francisella tularensis subsp. holarctica (strain FTNF002-00 / FTA)).